The sequence spans 40 residues: uncharacterized protein (40 aa).

This is an uncharacterized protein from Acheta domesticus (House cricket).